Reading from the N-terminus, the 277-residue chain is DNA-binding transcriptional activator MhpR (277 aa).

One can recognise an HTH iclR-type domain in the interval 12 to 74 (VRGLTRGLML…PSDDSFRLTI (63 aa)). Positions 34-53 (VGLLAELSGLHRTTVRRLLE) form a DNA-binding region, H-T-H motif. The IclR-ED domain maps to 89-262 (ISALAAPLLG…AKQIEEGVES (174 aa)).

Its function is as follows. Activator of the mhpABCDFE operon coding for components of the 3-hydroxyphenylpropionate degradation pathway. This is DNA-binding transcriptional activator MhpR (mhpR) from Escherichia coli (strain K12).